Reading from the N-terminus, the 653-residue chain is ATP-dependent rRNA helicase SPB4 (653 aa).

A Q motif motif is present at residues 17–45 (WQALTPPLSEWILDAVAAMGFTRMTPVQA). Residues 48-257 (IPLFMGHKDV…RVGLRNPVKI (210 aa)) form the Helicase ATP-binding domain. Position 61–68 (61–68 (AVTGSGKT)) interacts with ATP. Positions 205 to 208 (DEAD) match the DEAD box motif. One can recognise a Helicase C-terminal domain in the interval 291–444 (AIRQILNSID…SPPVALSDTL (154 aa)). A disordered region spans residues 534-653 (KQREKHRQES…DGESEFEGFD (120 aa)). Over residues 558 to 569 (PSSSSNNDTAPW) the composition is skewed to polar residues. A coiled-coil region spans residues 571–627 (KTLEKKSDKEKRRERKRAKKEREHWEKMTEEEKTKSRETHQMLEELRKKNRQELNAK). Composition is skewed to basic and acidic residues over residues 572–581 (TLEKKSDKEK) and 590–626 (KEREHWEKMTEEEKTKSRETHQMLEELRKKNRQELNA). Positions 627-636 (KSHTSSSVLS) are enriched in polar residues. Positions 641 to 653 (AELDGESEFEGFD) are enriched in acidic residues.

The protein belongs to the DEAD box helicase family. DDX55/SPB4 subfamily. In terms of assembly, component of pre-60S ribosomal complexes.

Its subcellular location is the nucleus. The protein localises to the nucleolus. It catalyses the reaction ATP + H2O = ADP + phosphate + H(+). In terms of biological role, ATP-binding RNA helicase involved in the biogenesis of 60S ribosomal subunits. Binds 90S pre-ribosomal particles and dissociates from pre-60S ribosomal particles after processing of 27SB pre-rRNA. Required for the normal formation of 18S rRNA through the processing of pre-rRNAs at sites A0, A1 and A2, and the normal formation of 25S and 5.8S rRNAs through the processing of pre-rRNAs at sites C1 and C2. The chain is ATP-dependent rRNA helicase SPB4 from Coccidioides immitis (strain RS) (Valley fever fungus).